A 183-amino-acid chain; its full sequence is MAILRLENGTTYTQLADISLELAKLNVTLNYWPIENEATRQLLKQASLTDEEKEIVLTSLDGYFEQLKQEAGYQARDLIVLHPEIANLDTLLAKFERCHTHADDEVRYIIDGEGVFGFVFADGSQGELTIQPQEYINVPAHSEHWFHLTASKRVKAVRYFTSTAGWVPEYTETVIRFPSLTAV.

Fe(2+) is bound by residues histidine 99, histidine 101, glutamate 105, and histidine 144. Residues histidine 99, histidine 101, glutamate 105, and histidine 144 each coordinate Ni(2+).

Belongs to the acireductone dioxygenase (ARD) family. As to quaternary structure, monomer. The cofactor is Fe(2+). Requires Ni(2+) as cofactor.

It catalyses the reaction 1,2-dihydroxy-5-(methylsulfanyl)pent-1-en-3-one + O2 = 3-(methylsulfanyl)propanoate + CO + formate + 2 H(+). The enzyme catalyses 1,2-dihydroxy-5-(methylsulfanyl)pent-1-en-3-one + O2 = 4-methylsulfanyl-2-oxobutanoate + formate + 2 H(+). Its pathway is amino-acid biosynthesis; L-methionine biosynthesis via salvage pathway; L-methionine from S-methyl-5-thio-alpha-D-ribose 1-phosphate: step 5/6. In terms of biological role, catalyzes 2 different reactions between oxygen and the acireductone 1,2-dihydroxy-3-keto-5-methylthiopentene (DHK-MTPene) depending upon the metal bound in the active site. Fe-containing acireductone dioxygenase (Fe-ARD) produces formate and 2-keto-4-methylthiobutyrate (KMTB), the alpha-ketoacid precursor of methionine in the methionine recycle pathway. Ni-containing acireductone dioxygenase (Ni-ARD) produces methylthiopropionate, carbon monoxide and formate, and does not lie on the methionine recycle pathway. This Microcystis aeruginosa (strain NIES-843 / IAM M-2473) protein is Acireductone dioxygenase.